Here is a 5209-residue protein sequence, read N- to C-terminus: E3 ubiquitin-protein ligase rnf213-alpha (5209 aa).

Composition is skewed to polar residues over residues 27 to 52 (SQSY…QITN) and 61 to 72 (ESKSLEIQNANV). The disordered stretch occupies residues 27–373 (SQSYETTQGT…KRNTRSTQHI (347 aa)). Over residues 85–101 (PKKKKRKKRKKEKKKKS) the composition is skewed to basic residues. A compositionally biased stretch (low complexity) spans 108–118 (SSLTSDLSDIS). The span at 119–128 (LTDKEKKMDT) shows a compositional bias: basic and acidic residues. Composition is skewed to polar residues over residues 167-177 (LSASALTTGSS) and 184-195 (IGTTQKPVSASA). A compositionally biased stretch (basic and acidic residues) spans 205-218 (QTKEEKVKCKDEGQ). Over residues 219–243 (KSLSAKAQHTPNANVDQNANVQSDA) the composition is skewed to polar residues. Low complexity predominate over residues 256-269 (KSSSVKTKPSKSTV). 2 stretches are compositionally biased toward basic and acidic residues: residues 271 to 288 (DPKK…RDNE) and 330 to 352 (MKVE…SKES). Residues 2036 to 2041 (GVGKSL), Glu-2135, Asp-2193, Arg-2252, Lys-2535, and Ser-2610 each bind ATP. Zn(2+) contacts are provided by Cys-4005, Cys-4008, Cys-4020, His-4022, Cys-4025, Cys-4028, Cys-4040, Cys-4043, Cys-4507, and His-4511. Residues 4005–4043 (CPVCMGDPRDPLSLPCDHIYCLTCIRQWLVPGQMHCPLC) form an RING-type zinc finger. The RZ-type zinc-finger motif lies at 4487-4557 (MPDDMLAVAQ…MQIQADRTQS (71 aa)). Cys-4518 serves as the catalytic Nucleophile; for E3 ubiquitin-lipopolysaccharide ligase activity. Zn(2+)-binding residues include Cys-4527 and Cys-4530.

This sequence belongs to the AAA ATPase family.

It is found in the cytoplasm. The protein resides in the cytosol. Its subcellular location is the lipid droplet. It carries out the reaction S-ubiquitinyl-[E2 ubiquitin-conjugating enzyme]-L-cysteine + [acceptor protein]-L-lysine = [E2 ubiquitin-conjugating enzyme]-L-cysteine + N(6)-ubiquitinyl-[acceptor protein]-L-lysine.. The enzyme catalyses ATP + H2O = ADP + phosphate + H(+). The protein operates within protein modification; protein ubiquitination. In terms of biological role, atypical E3 ubiquitin ligase that can catalyze ubiquitination of both proteins and lipids, and which is involved in various processes, such as lipid metabolism, angiogenesis and cell-autonomous immunity. Acts as a key immune sensor by catalyzing ubiquitination of the lipid A moiety of bacterial lipopolysaccharide (LPS) via its RZ-type zinc-finger: restricts the proliferation of cytosolic bacteria, such as Salmonella, by generating the bacterial ubiquitin coat through the ubiquitination of LPS. Ubiquitination of LPS triggers cell-autonomous immunity, such as antibacterial autophagy, leading to degradation of the microbial invader. Involved in lipid metabolism by regulating fat storage and lipid droplet formation; act by inhibiting the lipolytic process. Also regulates lipotoxicity by inhibiting desaturation of fatty acids. Also acts as an E3 ubiquitin-protein ligase via its RING-type zinc finger. Involved in the non-canonical Wnt signaling pathway in vascular development: acts by mediating ubiquitination and degradation of proteins downstream of rspo3, leading to inhibit the non-canonical Wnt signaling pathway and promoting vessel regression. Also has ATPase activity; ATPase activity is required for ubiquitination of LPS. Also involved in neuromuscular regulation. The polypeptide is E3 ubiquitin-protein ligase rnf213-alpha (Danio rerio (Zebrafish)).